We begin with the raw amino-acid sequence, 392 residues long: Adenosine 3'-phospho 5'-phosphosulfate transporter 2 (392 aa).

The interval 11–35 (NINGSASGQQAPTSNSPTLTRKSSS) is disordered. 10 consecutive transmembrane segments (helical) span residues 62-82 (CAGVFILYILYGYLQELIFTV), 87-107 (PFGWFLTLVQFGYYIGFGLVE), 136-156 (LVLAALTLGTMGLSNSSLGYL), 159-179 (PTQVIFKCCKLIPVLVGSILI), 185-205 (GPLDFAAASCMCIGLAWFTLA), 212-232 (NFNLLGVAMISGALLCDAAIG), 249-269 (VVFYSYGLGFVYLFVIMLVTG), 286-306 (FGYGFLFSLSGYLGIQFVLAL), 314-334 (IAATVTTARKAVTIAFSFVLF), and 338-358 (FTVQYLWSGLIVVLGIYLNVY).

Belongs to the nucleotide-sugar transporter family. SLC35B subfamily.

It is found in the golgi apparatus membrane. Its function is as follows. Mediates the transport of adenosine 3'-phospho 5'-phosphosulfate (PAPS), from cytosol into Golgi. PAPS is a universal sulfuryl donor for sulfation events that take place in the Golgi. Essential for viability. Involved in glycosaminoglycan synthesis and the subsequent signaling. May be involved in hh and dpp signaling by controlling the sulfation of heparan sulfate (HS). The protein is Adenosine 3'-phospho 5'-phosphosulfate transporter 2 of Drosophila pseudoobscura pseudoobscura (Fruit fly).